Reading from the N-terminus, the 809-residue chain is Origin of replication complex subunit 1A (809 aa).

A compositionally biased stretch (low complexity) spans 1–47; it reads MASSLSSKAKTFKSPTKTPTKMYRKSYLSPSSTSLTPPQTPETLTPL. Positions 1 to 69 are disordered; sequence MASSLSSKAK…LGNDPIDLPG (69 aa). Residues 160-185 are histone H3 binding; the sequence is DPEIEDCQICFKSHTNTIMIECDDCL. The segment at 163–213 adopts a PHD-type zinc-finger fold; sequence IEDCQICFKSHTNTIMIECDDCLGGFHLNCLKPPLKEVPEGDWICQFCEVK. Zn(2+)-binding residues include cysteine 166, cysteine 169, cysteine 181, cysteine 184, histidine 189, and cysteine 192. Residues 201–205 form a histone H3 binding region; sequence PEGDW. The Zn(2+) site is built by cysteine 207 and cysteine 210. Positions 223–341 constitute a BAH domain; sequence PKPPEGKKLA…VHWGSFKRVA (119 aa). Positions 316-321 are histone H3 binding; the sequence is ASNDGD. The interval 431–799 is necessary and sufficient for ORC complex assembly; sequence PKSLPCRSKE…DDVAFALKDN (369 aa). ATP is bound by residues 466-473 and 466-474; these read GVPGTGKT and GVPGTGKTI. Mg(2+) contacts are provided by aspartate 556 and glutamate 557. Positions 557, 590, and 655 each coordinate ATP.

It belongs to the ORC1 family. As to quaternary structure, component of the origin recognition complex (ORC) composed of at least ORC1 (ORC1A or ORC1B), ORC2, ORC3, ORC4, ORC5 and ORC6. ORC is regulated in a cell-cycle and development dependent manner. It is sequentially assembled at the exit from anaphase of mitosis and disassembled as cells enter S phase. Interacts directly with ORC2, ORC3, ORC4 and ORC5. Binds mostly unmodified histone H3, and, with lower efficiency, H3K4me1 H3K4me2 and H3K4me3. Follow a cell-cycle regulation with a peak at the G1/S-phase. Mostly expressed in siliques, flowers and flower buds, and, to a lower extent, in roots, leaves and stems.

It localises to the nucleus. Its function is as follows. Essential protein. Component of the origin recognition complex (ORC) that binds origins of replication. It has a role in both chromosomal replication and mating type transcriptional silencing. Binds to the ARS consensus sequence (ACS) of origins of replication. H3K4me3 effector that positively regulates the transcription of a subset of genes. The protein is Origin of replication complex subunit 1A of Arabidopsis thaliana (Mouse-ear cress).